Here is a 440-residue protein sequence, read N- to C-terminus: 23S rRNA (uracil(1939)-C(5))-methyltransferase RlmD (440 aa).

The TRAM domain maps to 10-68 (KALPTQAVEITIDNLDHHLTGVGRYQGKACFVEGVLPGEKVSVQITEQKKQYAHARLRQ). 4 residues coordinate [4Fe-4S] cluster: cysteine 81, cysteine 87, cysteine 90, and cysteine 169. Residues glutamine 272, phenylalanine 301, asparagine 306, glutamate 322, aspartate 349, and aspartate 372 each contribute to the S-adenosyl-L-methionine site. The active-site Nucleophile is the cysteine 398.

The protein belongs to the class I-like SAM-binding methyltransferase superfamily. RNA M5U methyltransferase family. RlmD subfamily.

It catalyses the reaction uridine(1939) in 23S rRNA + S-adenosyl-L-methionine = 5-methyluridine(1939) in 23S rRNA + S-adenosyl-L-homocysteine + H(+). Functionally, catalyzes the formation of 5-methyl-uridine at position 1939 (m5U1939) in 23S rRNA. This chain is 23S rRNA (uracil(1939)-C(5))-methyltransferase RlmD, found in Tolumonas auensis (strain DSM 9187 / NBRC 110442 / TA 4).